A 317-amino-acid polypeptide reads, in one-letter code: Ferrochelatase (317 aa).

Positions 191 and 271 each coordinate Fe cation.

It belongs to the ferrochelatase family.

It localises to the cytoplasm. It carries out the reaction heme b + 2 H(+) = protoporphyrin IX + Fe(2+). Its pathway is porphyrin-containing compound metabolism; protoheme biosynthesis; protoheme from protoporphyrin-IX: step 1/1. Its function is as follows. Catalyzes the ferrous insertion into protoporphyrin IX. This Thermus thermophilus (strain ATCC BAA-163 / DSM 7039 / HB27) protein is Ferrochelatase.